We begin with the raw amino-acid sequence, 175 residues long: Ribulose bisphosphate carboxylase small subunit, chloroplastic (175 aa).

The N-terminal 34 residues, 1–34 (MSFATTNKTIVPCATTKQIVRPRFLSNGTISKSR), are a transit peptide targeting the chloroplast.

It belongs to the RuBisCO small chain family. As to quaternary structure, heterohexadecamer of 8 large and 8 small subunits.

It is found in the plastid. Its subcellular location is the chloroplast. In terms of biological role, ruBisCO catalyzes two reactions: the carboxylation of D-ribulose 1,5-bisphosphate, the primary event in carbon dioxide fixation, as well as the oxidative fragmentation of the pentose substrate. Both reactions occur simultaneously and in competition at the same active site. Although the small subunit is not catalytic it is essential for maximal activity. The polypeptide is Ribulose bisphosphate carboxylase small subunit, chloroplastic (Batophora oerstedii (Green alga)).